The sequence spans 245 residues: Tetraspanin-16 (245 aa).

Topologically, residues 1-13 (MAEIHTPYSSLKK) are cytoplasmic. The chain crosses the membrane as a helical span at residues 14-34 (LLSLLNGFVAVSGIILVGLGI). Topologically, residues 35-37 (GGK) are extracellular. A helical transmembrane segment spans residues 38 to 58 (CGGASLTNVLGLSSAYLLHVG). A topological domain (cytoplasmic) is located at residue Asn-59. The helical transmembrane segment at 60–80 (LCLVMGCITVLLGCAGWYGAT) threads the bilayer. Residues 81–94 (KESRGTLLFCILSM) lie on the Extracellular side of the membrane. The helical transmembrane segment at 95 to 115 (VIVLIMEVTAATVVLLFFPIV) threads the bilayer. Topologically, residues 116–245 (GDVALEHTFV…VAQAGLELLA (130 aa)) are cytoplasmic.

The protein belongs to the tetraspanin (TM4SF) family. As to expression, broadly expressed in most human tissues and cell lines including neural and bone marrow derived tissues.

It is found in the membrane. In Homo sapiens (Human), this protein is Tetraspanin-16 (TSPAN16).